The sequence spans 179 residues: Large ribosomal subunit protein uL5 (179 aa).

The protein belongs to the universal ribosomal protein uL5 family. In terms of assembly, part of the 50S ribosomal subunit; part of the 5S rRNA/L5/L18/L25 subcomplex. Contacts the 5S rRNA and the P site tRNA. Forms a bridge to the 30S subunit in the 70S ribosome.

Functionally, this is one of the proteins that bind and probably mediate the attachment of the 5S RNA into the large ribosomal subunit, where it forms part of the central protuberance. In the 70S ribosome it contacts protein S13 of the 30S subunit (bridge B1b), connecting the 2 subunits; this bridge is implicated in subunit movement. Contacts the P site tRNA; the 5S rRNA and some of its associated proteins might help stabilize positioning of ribosome-bound tRNAs. The protein is Large ribosomal subunit protein uL5 of Pseudomonas syringae pv. tomato (strain ATCC BAA-871 / DC3000).